Here is a 297-residue protein sequence, read N- to C-terminus: Nucleotide-binding protein BURPS668_0577 (297 aa).

8–15 (GISGSGKS) contacts ATP. Residue 57–60 (DARS) coordinates GTP.

The protein belongs to the RapZ-like family.

Functionally, displays ATPase and GTPase activities. This Burkholderia pseudomallei (strain 668) protein is Nucleotide-binding protein BURPS668_0577.